Consider the following 1025-residue polypeptide: Retinoblastoma-related protein (1025 aa).

The segment at 1 to 20 is disordered; sequence MEDHPPKPSIPTADASLSNH. The tract at residues 422-623 is domain A; sequence TPVTTAMTTA…EKGSSMYNSL (202 aa). The interval 422–875 is pocket; that stretch reads TPVTTAMTTA…NEIFIPAVKP (454 aa). Residues 624–744 form a spacer region; it reads TVARPALSAE…PGAGGETCAE (121 aa). The segment at 745–875 is domain B; it reads TAINVFFSKI…NEIFIPAVKP (131 aa).

Belongs to the retinoblastoma protein (RB) family.

It localises to the nucleus. In terms of biological role, regulator of biological processes that recruits a histone deacetylase to control gene transcription. May play a role in the entry into mitosis, negatively regulating the cell proliferation. Formation of stable complexes with geminiviridae replication-associated proteins may create a cellular environment which favors viral DNA replication. This Camellia sinensis (Tea plant) protein is Retinoblastoma-related protein (pRB).